The following is a 279-amino-acid chain: Glycerol uptake facilitator protein (279 aa).

At 1 to 8 (MTTAAPTP) the chain is on the cytoplasmic side. The chain crosses the membrane as a helical span at residues 9-37 (SLFGQCLAEFLGTALLIFFGTGCVAALKV). Residues 38–42 (AGASF) lie on the Periplasmic side of the membrane. Residues 43–63 (GLWEISIIWGVGVSMAIYLSA) form a helical membrane-spanning segment. The Cytoplasmic segment spans residues 64–66 (GVS). The stretch at 67–70 (GAHL) is an intramembrane region. Positions 71–73 (NPA) match the NPA 1 motif. Residues 71–81 (NPAVSIALWLF) constitute an intramembrane region (helical). Over 82 to 87 (AGFEGR) the chain is Cytoplasmic. The chain crosses the membrane as a helical span at residues 88–111 (KLPFYITAQVAGAFCAAALVYTLY). The Periplasmic segment spans residues 112–146 (SSLFIEFEQAQNIVRGSQDSLALASVFSTYPHPAL). A helical membrane pass occupies residues 147–172 (SVGQAFLVEVVITAILMAVIMALTDD). At 173 to 180 (GNGLPRGP) the chain is on the cytoplasmic side. The helical transmembrane segment at 181–197 (LAPLLIGLLIAVIGSAM) threads the bilayer. Topologically, residues 198–201 (GPLT) are periplasmic. An intramembrane segment occupies 202–205 (GFAM). An NPA 2 motif is present at residues 206 to 208 (NPA). Residues 206–219 (NPARDFGPKLMTYL) constitute an intramembrane region (helical). At 220-234 (AGWGPIAFTGGREIP) the chain is on the periplasmic side. The chain crosses the membrane as a helical span at residues 235-257 (YFLVPIFAPILGACLGAGGYRVL). Over 258-279 (IARHLPSAAAPAEAEPEKVRAS) the chain is Cytoplasmic.

This sequence belongs to the MIP/aquaporin (TC 1.A.8) family.

The protein resides in the cell inner membrane. The catalysed reaction is glycerol(in) = glycerol(out). Its function is as follows. Mediates glycerol diffusion across the cytoplasmic membrane via a pore-type mechanism. In Pseudomonas aeruginosa (strain ATCC 15692 / DSM 22644 / CIP 104116 / JCM 14847 / LMG 12228 / 1C / PRS 101 / PAO1), this protein is Glycerol uptake facilitator protein (glpF).